An 811-amino-acid polypeptide reads, in one-letter code: Probable potassium transporter 16 (811 aa).

The Cytoplasmic segment spans residues 1–66; that stretch reads MAQQQAGARG…GQESWMRTLR (66 aa). The helical transmembrane segment at 67 to 87 threads the bilayer; that stretch reads LGFQCVGILHADLGTSPLYVY. Residues 88–100 lie on the Extracellular side of the membrane; the sequence is QNTFKYGIKHEDD. A helical transmembrane segment spans residues 101-121; it reads IIGVLSLIIYSFVLFTMVKIV. Over 122 to 190 the chain is Cytoplasmic; the sequence is FIALHANDDG…KSQLEKKPAK (69 aa). The helical transmembrane segment at 191–211 threads the bilayer; that stretch reads IAVFFLTIFATALAISDCVLN. At 212-228 the chain is on the extracellular side; it reads PSVSVLSAVNGLKLRAP. A helical transmembrane segment spans residues 229–249; sequence HLTTDEVVWITVGILVVFFAV. The Cytoplasmic portion of the chain corresponds to 250-256; that stretch reads QRFGTDK. A helical transmembrane segment spans residues 257 to 277; the sequence is IGYTFAPVVVVWLLLISGIGI. Residues 278–310 lie on the Extracellular side of the membrane; sequence YDLVKYDVGVLRAFNPKYIIDYFRRNKKDGWVQ. A helical transmembrane segment spans residues 311 to 331; sequence LGEVLLTFTGTEALFADLGYF. At 332–337 the chain is on the cytoplasmic side; that stretch reads SIKSIQ. Residues 338-358 form a helical membrane-spanning segment; sequence LSSTFVLLPSVLCTYIGQAAY. The Extracellular segment spans residues 359-379; the sequence is LRKHMDQQHIQNAFFNSIPRP. Residues 380-400 traverse the membrane as a helical segment; the sequence is LFWPMFVLAIMTSVIGCQAMV. Residues 401–438 lie on the Cytoplasmic side of the membrane; it reads SCAFATMSHLQTLNCFPRIKILHTSRRYSGQLYSPEVN. Residues 439 to 459 traverse the membrane as a helical segment; the sequence is FFLCLLSCVITLSFRTTGFIV. At 460-463 the chain is on the extracellular side; that stretch reads KAHE. Residues 464–484 traverse the membrane as a helical segment; sequence ICVVLVMVITTILMTIVMLLV. At 485–488 the chain is on the cytoplasmic side; the sequence is WKVN. A helical transmembrane segment spans residues 489-509; the sequence is IWWIVLFFVVFMSTETVYLSA. The Extracellular segment spans residues 510–519; that stretch reads VLYKFTKGPY. Residues 520–540 traverse the membrane as a helical segment; that stretch reads MPLAMSAVLMVIMFVWHYVHV. Topologically, residues 541 to 811 are cytoplasmic; sequence KRYKFELEHT…LLKVGITYEI (271 aa).

This sequence belongs to the HAK/KUP transporter (TC 2.A.72.3) family.

Its subcellular location is the membrane. In terms of biological role, high-affinity potassium transporter. The protein is Probable potassium transporter 16 (HAK16) of Oryza sativa subsp. japonica (Rice).